A 92-amino-acid chain; its full sequence is RQC P-site tRNA stabilizing factor (92 aa).

In terms of domain architecture, S4 RNA-binding spans 5-65; the sequence is MRLDKYLKVS…GPKIVTAKIE (61 aa).

This sequence belongs to the RqcP family. In terms of assembly, associates with stalled 50S ribosomal subunits. Binds to RqcH, 23S rRNA and the P-site tRNA. Does not require RqcH for association with 50S subunits.

In terms of biological role, key component of the ribosome quality control system (RQC), a ribosome-associated complex that mediates the extraction of incompletely synthesized nascent chains from stalled ribosomes and their subsequent degradation. RqcH recruits Ala-charged tRNA, and with RqcP directs the elongation of stalled nascent chains on 50S ribosomal subunits, leading to non-templated C-terminal alanine extensions (Ala tail). The Ala tail promotes nascent chain degradation. RqcP is associated with the translocation-like movement of the peptidyl-tRNA from the A-site into the P-site. The protein is RQC P-site tRNA stabilizing factor of Listeria monocytogenes serovar 1/2a (strain ATCC BAA-679 / EGD-e).